We begin with the raw amino-acid sequence, 313 residues long: 4-hydroxy-3-methylbut-2-enyl diphosphate reductase (313 aa).

[4Fe-4S] cluster is bound at residue C12. (2E)-4-hydroxy-3-methylbut-2-enyl diphosphate contacts are provided by H41 and H74. Residues H41 and H74 each coordinate dimethylallyl diphosphate. Residues H41 and H74 each coordinate isopentenyl diphosphate. C96 lines the [4Fe-4S] cluster pocket. Residue H124 coordinates (2E)-4-hydroxy-3-methylbut-2-enyl diphosphate. A dimethylallyl diphosphate-binding site is contributed by H124. H124 is a binding site for isopentenyl diphosphate. E126 functions as the Proton donor in the catalytic mechanism. T167 contacts (2E)-4-hydroxy-3-methylbut-2-enyl diphosphate. C197 lines the [4Fe-4S] cluster pocket. (2E)-4-hydroxy-3-methylbut-2-enyl diphosphate is bound by residues S225, S226, N227, and S269. Dimethylallyl diphosphate-binding residues include S225, S226, N227, and S269. The isopentenyl diphosphate site is built by S225, S226, N227, and S269.

This sequence belongs to the IspH family. In terms of assembly, homodimer. [4Fe-4S] cluster serves as cofactor.

The catalysed reaction is isopentenyl diphosphate + 2 oxidized [2Fe-2S]-[ferredoxin] + H2O = (2E)-4-hydroxy-3-methylbut-2-enyl diphosphate + 2 reduced [2Fe-2S]-[ferredoxin] + 2 H(+). The enzyme catalyses dimethylallyl diphosphate + 2 oxidized [2Fe-2S]-[ferredoxin] + H2O = (2E)-4-hydroxy-3-methylbut-2-enyl diphosphate + 2 reduced [2Fe-2S]-[ferredoxin] + 2 H(+). It functions in the pathway isoprenoid biosynthesis; dimethylallyl diphosphate biosynthesis; dimethylallyl diphosphate from (2E)-4-hydroxy-3-methylbutenyl diphosphate: step 1/1. It participates in isoprenoid biosynthesis; isopentenyl diphosphate biosynthesis via DXP pathway; isopentenyl diphosphate from 1-deoxy-D-xylulose 5-phosphate: step 6/6. Catalyzes the conversion of 1-hydroxy-2-methyl-2-(E)-butenyl 4-diphosphate (HMBPP) into a mixture of isopentenyl diphosphate (IPP) and dimethylallyl diphosphate (DMAPP). Acts in the terminal step of the DOXP/MEP pathway for isoprenoid precursor biosynthesis. This Buchnera aphidicola subsp. Schizaphis graminum (strain Sg) protein is 4-hydroxy-3-methylbut-2-enyl diphosphate reductase.